A 588-amino-acid chain; its full sequence is Histone deacetylase 9 (588 aa).

Residue serine 22 is modified to Phosphoserine. Positions 23–27 (PLDLR) are interaction with CTBP1. Basic and acidic residues predominate over residues 110–147 (RQEQEVERHRREQQLPPLRGKDRGRERAVASTEVKQKL). Disordered regions lie at residues 110-170 (RQEQ…HSVG), 183-242 (TSLD…SSPL), and 264-301 (SSVSSSSPGSGPSSPNNGPAGNVTENEASALPPTPHPE). The interaction with MEF2 stretch occupies residues 136-154 (RAVASTEVKQKLQEFLLSK). 2 stretches are compositionally biased toward polar residues: residues 154 to 166 (KSATKDTPTNGKN) and 185 to 199 (LDQSSPPLSGTSPSY). The interval 175–343 (LWYTAAHHTS…LPAVPSPLNA (169 aa)) is interaction with MAPK10. Residues 208-219 (DSKDDFPLRKTA) show a composition bias toward basic and acidic residues. Residues 218-261 (TASEPNLKVRSRLKQKVAERRSSPLLRRKDGNLVTSFKKRVFEV) are interaction with ETV6. Serine 220 bears the Phosphoserine mark. Residues 233–242 (KVAERRSSPL) are compositionally biased toward basic and acidic residues. The residue at position 240 (serine 240) is a Phosphoserine; by DYRK1B. The span at 264–284 (SSVSSSSPGSGPSSPNNGPAG) shows a compositional bias: low complexity. Position 450 is a phosphoserine (serine 450). The disordered stretch occupies residues 493–533 (QLKQPGSHLEEAEEELQGDQSMEDRAASKDNSARSDSSACV). Positions 514 to 525 (MEDRAASKDNSA) are enriched in basic and acidic residues. Serine 552 is subject to Phosphoserine.

It belongs to the histone deacetylase family. HD type 2 subfamily. In terms of assembly, homodimer. Interacts with ETV6. Interacts with MEF2, HDAC1, HDAC3, HDAC4, HDAC5, CTBP1 and MAPK10. The phosphorylated form interacts with 14-3-3. Interacts with FOXP3 in the absence of T-cell stimulation. Post-translationally, sumoylated. In terms of processing, phosphorylated on Ser-220 and Ser-450; which promotes 14-3-3-binding, impairs interaction with MEF2, and antagonizes antimyogenic activity. Phosphorylated on Ser-240 by DYRK1B; which impairs nuclear accumulation. Phosphorylated by the PKC kinases PKN1 and PKN2, impairing nuclear import. Expressed at high levels in heart, brain and spleen. Expressed in skeletal muscle.

The protein localises to the nucleus. It catalyses the reaction N(6)-acetyl-L-lysyl-[histone] + H2O = L-lysyl-[histone] + acetate. Its function is as follows. Devoided of intrinsic deacetylase activity, promotes the deacetylation of lysine residues on the N-terminal part of the core histones (H2A, H2B, H3 and H4) by recruiting HDAC1 and HDAC3. Histone deacetylation gives a tag for epigenetic repression and plays an important role in transcriptional regulation, cell cycle progression and developmental events. Represses MEF2-dependent transcription, inhibits skeletal myogenesis and may be involved in heart development. Protects neurons from apoptosis, both by inhibiting JUN phosphorylation by MAPK10 and by repressing JUN transcription via HDAC1 recruitment to JUN promoter. The sequence is that of Histone deacetylase 9 (Hdac9) from Mus musculus (Mouse).